The sequence spans 84 residues: Small ribosomal subunit protein bS18A (84 aa).

The protein belongs to the bacterial ribosomal protein bS18 family. As to quaternary structure, part of the 30S ribosomal subunit. Forms a tight heterodimer with protein bS6.

In terms of biological role, binds as a heterodimer with protein bS6 to the central domain of the 16S rRNA, where it helps stabilize the platform of the 30S subunit. The sequence is that of Small ribosomal subunit protein bS18A from Mycobacterium marinum (strain ATCC BAA-535 / M).